We begin with the raw amino-acid sequence, 758 residues long: Spastin (758 aa).

Positions 1 to 103 are disordered; it reads MVRTKNQSSS…SPRSGHHHSY (103 aa). At 1 to 121 the chain is on the cytoplasmic side; sequence MVRTKNQSSS…KQNLYVVSFP (121 aa). The tract at residues 1 to 159 is interaction with atl; the sequence is MVRTKNQSSS…VIYRPHRRDC (159 aa). The required for localization to punctate cytoplasmic foci stretch occupies residues 1–210; sequence MVRTKNQSSS…RPIQPLEMAA (210 aa). 4 stretches are compositionally biased toward low complexity: residues 8 to 28, 43 to 58, 66 to 76, and 85 to 95; these read SSSSSASSSSTKSPIKSSSGA, RSSSASNVAAVVAGGS, SSNRRSPGSSP, and TDDLTPTTCSP. Positions 122–142 form an intramembrane region, helical; the sequence is IIFLFNVLRSLIYQLFCIFRY. Residues 143-758 lie on the Cytoplasmic side of the membrane; that stretch reads LYGASTKVIY…WSQDYGDITI (616 aa). Composition is skewed to polar residues over residues 169–180 and 189–198; these read SKEQQQSLNHPS and QEQQLSNQPQ. The segment at 169–202 is disordered; that stretch reads SKEQQQSLNHPSELNREGDGQEQQLSNQPQRFRP. The tract at residues 208 to 758 is sufficient for interaction with microtubules and microtubule severing; sequence MAANRPGGGY…WSQDYGDITI (551 aa). Positions 233 to 308 constitute an MIT domain; it reads HRRAFEYISK…SMARDRLHFL (76 aa). The tract at residues 353–454 is disordered; sequence RVRSSGYGPK…GPSGSGASTP (102 aa). Polar residues-rich tracts occupy residues 390-406 and 425-454; these read NKSQTLPRNLGSKTSVG and QFSSGRNTPPQRSRTPINNNGPSGSGASTP. The residue at position 439 (Thr-439) is a Phosphothreonine. Positions 443-455 are required for interaction with microtubules; the sequence is NNGPSGSGASTPV. 523-530 contributes to the ATP binding site; the sequence is GPPGNGKT.

The protein belongs to the AAA ATPase family. Spastin subfamily. As to quaternary structure, homohexamer. The homohexamer is stabilized by ATP-binding. The homohexamer may adopt a ring conformation through which microtubules pass prior to being severed. Interacts with microtubules. Interacts with atl; may be involved in microtubule dynamics.

It is found in the membrane. It localises to the cytoplasm. The protein localises to the cytoskeleton. Its subcellular location is the microtubule organizing center. The protein resides in the centrosome. It is found in the chromosome. It localises to the lipid droplet. It catalyses the reaction n ATP + n H2O + a microtubule = n ADP + n phosphate + (n+1) alpha/beta tubulin heterodimers.. Functionally, ATP-dependent microtubule severing protein. Stimulates microtubule minus-end depolymerization and poleward microtubule flux in the mitotic spindle. Regulates microtubule stability in the neuromuscular junction synapse. Involved in lipid metabolism by regulating the size and distribution of lipid droplets. Involved in axon regeneration by regulating microtubule severing. This Drosophila melanogaster (Fruit fly) protein is Spastin.